The chain runs to 354 residues: Homeobox-leucine zipper protein HOX27 (354 aa).

Residues 98–175 (SVAAGAPGME…DDEGASARKK (78 aa)) form a disordered region. Residues 148–157 (QGGGGGGGGE) show a composition bias toward gly residues. A DNA-binding region (homeobox) is located at residues 171–230 (SARKKLRLSKEQSAFLEESFKEHSTLNPKQKVALAKQLNLRPRQVEVWFQNRRARTKLKQ). The tract at residues 229 to 273 (KQTEVDCEYLKRCCETLTEENRRLHKELAELRALKTARPFYMHLP) is leucine-zipper. The tract at residues 294 to 323 (STSAPAAATSPAAAPTAAARTAVASPEPHR) is disordered.

This sequence belongs to the HD-ZIP homeobox family. Class II subfamily. In terms of tissue distribution, expressed in seedlings, roots, stems, leaf sheaths and blades and panicles.

It is found in the nucleus. In terms of biological role, probable transcription factor. The chain is Homeobox-leucine zipper protein HOX27 (HOX27) from Oryza sativa subsp. indica (Rice).